Here is a 317-residue protein sequence, read N- to C-terminus: Glucokinase (317 aa).

The protein belongs to the ROK (NagC/XylR) family. In terms of assembly, homodimer. Requires a divalent metal cation as cofactor.

It catalyses the reaction D-glucose + ATP = D-glucose 6-phosphate + ADP + H(+). Its function is as follows. Catalyzes the phosphorylation of D-glucose to D-glucose 6-phosphate using ATP as the phosphate donor. Can also phosphorylate 2-deoxyglucose, with lower efficiency. ITP can also serve as a phosphoryl donor. This Thermotoga maritima (strain ATCC 43589 / DSM 3109 / JCM 10099 / NBRC 100826 / MSB8) protein is Glucokinase.